The following is a 284-amino-acid chain: Shikimate dehydrogenase (NADP(+)) (284 aa).

Shikimate contacts are provided by residues 20-22 and S67; that span reads SIS. K71 functions as the Proton acceptor in the catalytic mechanism. D83 contributes to the NADP(+) binding site. Residues N92 and D107 each coordinate shikimate. NADP(+) contacts are provided by residues 129–133 and I227; that span reads GAGGA. Shikimate is bound at residue Y229. G250 lines the NADP(+) pocket.

The protein belongs to the shikimate dehydrogenase family. As to quaternary structure, homodimer.

The enzyme catalyses shikimate + NADP(+) = 3-dehydroshikimate + NADPH + H(+). It functions in the pathway metabolic intermediate biosynthesis; chorismate biosynthesis; chorismate from D-erythrose 4-phosphate and phosphoenolpyruvate: step 4/7. Involved in the biosynthesis of the chorismate, which leads to the biosynthesis of aromatic amino acids. Catalyzes the reversible NADPH linked reduction of 3-dehydroshikimate (DHSA) to yield shikimate (SA). The protein is Shikimate dehydrogenase (NADP(+)) of Streptococcus pneumoniae (strain 70585).